A 150-amino-acid polypeptide reads, in one-letter code: Large ribosomal subunit protein bL9 (150 aa).

Belongs to the bacterial ribosomal protein bL9 family.

Functionally, binds to the 23S rRNA. This is Large ribosomal subunit protein bL9 from Limosilactobacillus reuteri (strain DSM 20016) (Lactobacillus reuteri).